The primary structure comprises 275 residues: Phosphate import ATP-binding protein PstB 1 (275 aa).

The ABC transporter domain occupies 22–261 (LETQAVSVYY…NRTEKIFNSP (240 aa)). Position 54 to 61 (54 to 61 (GPSGCGKS)) interacts with ATP.

It belongs to the ABC transporter superfamily. Phosphate importer (TC 3.A.1.7) family. The complex is composed of two ATP-binding proteins (PstB), two transmembrane proteins (PstC and PstA) and a solute-binding protein (PstS).

It is found in the cell inner membrane. The enzyme catalyses phosphate(out) + ATP + H2O = ADP + 2 phosphate(in) + H(+). Functionally, part of the ABC transporter complex PstSACB involved in phosphate import. Responsible for energy coupling to the transport system. The polypeptide is Phosphate import ATP-binding protein PstB 1 (Synechococcus sp. (strain JA-2-3B'a(2-13)) (Cyanobacteria bacterium Yellowstone B-Prime)).